A 253-amino-acid chain; its full sequence is Chitooligosaccharide deacetylase (253 aa).

Positions 61 and 125 each coordinate Mg(2+).

It belongs to the YdjC deacetylase family. ChbG subfamily. In terms of assembly, homodimer. Mg(2+) is required as a cofactor.

It is found in the cytoplasm. The catalysed reaction is N,N'-diacetylchitobiose + H2O = N-acetyl-beta-D-glucosaminyl-(1-&gt;4)-D-glucosamine + acetate. It carries out the reaction diacetylchitobiose-6'-phosphate + H2O = N'-monoacetylchitobiose-6'-phosphate + acetate. Its pathway is glycan degradation; chitin degradation. In terms of biological role, involved in the degradation of chitin. ChbG is essential for growth on the acetylated chitooligosaccharides chitobiose and chitotriose but is dispensable for growth on cellobiose and chitosan dimer, the deacetylated form of chitobiose. Deacetylation of chitobiose-6-P and chitotriose-6-P is necessary for both the activation of the chb promoter by the regulatory protein ChbR and the hydrolysis of phosphorylated beta-glucosides by the phospho-beta-glucosidase ChbF. Catalyzes the removal of only one acetyl group from chitobiose-6-P to yield monoacetylchitobiose-6-P, the inducer of ChbR and the substrate of ChbF. The sequence is that of Chitooligosaccharide deacetylase from Proteus mirabilis (strain HI4320).